A 305-amino-acid polypeptide reads, in one-letter code: Glycine--tRNA ligase alpha subunit (305 aa).

It belongs to the class-II aminoacyl-tRNA synthetase family. Tetramer of two alpha and two beta subunits.

Its subcellular location is the cytoplasm. It catalyses the reaction tRNA(Gly) + glycine + ATP = glycyl-tRNA(Gly) + AMP + diphosphate. The protein is Glycine--tRNA ligase alpha subunit of Streptococcus pneumoniae (strain P1031).